Consider the following 956-residue polypeptide: Glutamate receptor ionotropic, kainate 4 (956 aa).

An N-terminal signal peptide occupies residues Met1 to Cys20. The Extracellular portion of the chain corresponds to Ser21 to Pro545. Residues Asn158, Asn220, Asn272, Asn286, Asn323, Asn408, Asn415, and Asn479 are each glycosylated (N-linked (GlcNAc...) asparagine). Residues Gly500, Thr502, and Arg507 each coordinate L-glutamate. A helical membrane pass occupies residues Gly546 to Ala566. At Arg567–Gly623 the chain is on the cytoplasmic side. A helical transmembrane segment spans residues Val624 to Leu644. Topologically, residues Thr645–Asn804 are extracellular. Residues Ser674, Ser675, and Glu723 each contribute to the L-glutamate site. The N-linked (GlcNAc...) asparagine glycan is linked to Asn736. A helical membrane pass occupies residues Ile805–Leu825. The Cytoplasmic portion of the chain corresponds to Glu826 to Glu956. The segment at Leu931–Glu956 is disordered. Over residues Arg939–Lys948 the composition is skewed to basic and acidic residues.

This sequence belongs to the glutamate-gated ion channel (TC 1.A.10.1) family. GRIK4 subfamily. As to quaternary structure, homodimer. Can form functional heteromeric receptors with GRIK1, GRIK2 and GRIK3 subunits. Forms a heteromeric complex with GRIK2. Expressed in the hippocampus and cerebellum (at protein level).

It is found in the cell membrane. It localises to the postsynaptic cell membrane. Its subcellular location is the presynaptic cell membrane. Ionotropic glutamate receptor that functions as a cation-permeable ligand-gated ion channel. Cannot form functional channels on its own and produces channel activity only in heteromeric assembly with GRIK1, GRIK2 and GRIK3 subunits. This Mus musculus (Mouse) protein is Glutamate receptor ionotropic, kainate 4 (Grik4).